A 114-amino-acid chain; its full sequence is Nuclear transition protein 2 (114 aa).

The tract at residues 1 to 114 is disordered; that stretch reads MDTKMQSLPT…KRRSSGRRYK (114 aa). Histidine 12, histidine 14, histidine 16, histidine 24, cysteine 29, cysteine 31, cysteine 35, and cysteine 38 together coordinate Zn(2+). The segment covering 16–25 has biased composition (low complexity); it reads HSSSRPQSHT. A Nuclear localization signal motif is present at residues 87–95; that stretch reads GKVSKRKAV. The segment covering 90–114 has biased composition (basic residues); the sequence is SKRKAVRRRKRTHRAKRRSSGRRYK. Position 101 is a phosphothreonine; by PKA (threonine 101). Serine 109 carries the phosphoserine; by PKA modification.

The protein belongs to the nuclear transition protein 2 family. Testis.

It is found in the nucleus. Its subcellular location is the nucleolus. The protein resides in the chromosome. Functionally, plays a key role in the replacement of histones to protamine in the elongating spermatids of mammals. In condensing spermatids, loaded onto the nucleosomes, where it promotes the recruitment and processing of protamines, which are responsible for histone eviction. This chain is Nuclear transition protein 2 (Tnp2), found in Rattus norvegicus (Rat).